Reading from the N-terminus, the 242-residue chain is High mobility group protein homolog (242 aa).

2 consecutive DNA-binding regions (HMG box) follow at residues 54 to 122 (PKRN…EANK) and 126 to 197 (KPVK…IDKE).

It localises to the host nucleus. This chain is High mobility group protein homolog (EF1), found in Acheta domesticus (House cricket).